The following is a 633-amino-acid chain: Pesticidal crystal protein Cry2Ab (633 aa).

It belongs to the delta endotoxin family.

In terms of biological role, promotes colloidosmotic lysis by binding to the midgut epithelial cells of lepidopteran (Manduca sexta) larvae. The sequence is that of Pesticidal crystal protein Cry2Ab (cry2Ab) from Bacillus thuringiensis subsp. kurstaki.